The chain runs to 481 residues: Cholesterol 16,22-dihydroxylase CYP90G4 (481 aa).

Residues 4 to 24 (SYLSFFVLSSILVLTLIFFFM) form a helical membrane-spanning segment. Cys426 provides a ligand contact to heme.

Belongs to the cytochrome P450 family. As to expression, mainly expressed in leaves and seed pods and, at low levels, in flowers and stems.

It is found in the membrane. The protein operates within steroid metabolism; cholesterol metabolism. In terms of biological role, involved in the biosynthesis of spiroketal steroid and saponin natural products from cholesterol such as diosgenin and analogs (e.g. furostanol and spirostanol), plant defense compounds used as main precursors for the industrial production of steroid hormones. During the 5,6-spiroketalization of cholesterol, catalyzes the hydroxylation of cholesterol to form 16S,22S-dihydroxycholesterol and, possibly, the subsequent conversion of 16S,22S-dihydroxycholesterol into 16-oxo-22-hydroxy-cholesterol and 16-hydroxy-22-oxo-cholesterol. 16-hydroxy-22-oxo-cholesterol submit a spontaneous reaction leading to the production of furostanol-type steroid diastereomers, precursors of diosgenin. The sequence is that of Cholesterol 16,22-dihydroxylase CYP90G4 from Trigonella foenum-graecum (Fenugreek).